A 1358-amino-acid chain; its full sequence is DNA mismatch repair protein Msh6 (1358 aa).

Residues 1–87 (MSRQSTLYSF…SSAQAVPPSS (87 aa)) are disordered. S14, S38, and S40 each carry phosphoserine. A compositionally biased stretch (low complexity) spans 25 to 46 (AEASRQGAAASGASASRGGDAA). K67 is subject to N6-acetyllysine. Low complexity predominate over residues 76 to 87 (ASSSAQAVPPSS). Residues S91, S137, S200, S219, and S227 each carry the phosphoserine modification. The 63-residue stretch at 92–154 (PGDLVWAKME…KRMLKPYTGS (63 aa)) folds into the PWWP domain. The segment at 197–360 (DEPSEPEEEE…VSGGGNDSSG (164 aa)) is disordered. Acidic residues-rich tracts occupy residues 198-209 (EPSEPEEEEETE) and 219-231 (SEEDNYNESEEEA). Over residues 240–249 (RSSRQVKKRR) the composition is skewed to basic residues. A phosphoserine mark is found at S252, S254, S256, and S261. Over residues 263-273 (VEFKPDTKQEG) the composition is skewed to basic and acidic residues. At T269 the chain carries Phosphothreonine. Phosphoserine occurs at positions 274, 275, 279, and 280. Polar residues predominate over residues 329–351 (LSETKSTLSAFSAPQNSESQTHV). T487 carries the phosphothreonine modification. The residue at position 503 (K503) is an N6-acetyllysine. Phosphoserine occurs at positions 827 and 932. Phosphothreonine is present on T1007. 1132–1139 (GPNMGGKS) lines the ATP pocket.

It belongs to the DNA mismatch repair MutS family. As to quaternary structure, component of the DNA mismatch repair (MMR) complex composed at least of MSH2, MSH3, MSH6, PMS1 and MLH1. Heterodimer consisting of MSH2-MSH6 (MutS alpha). Forms a ternary complex with MutL alpha (MLH1-PMS1). Interacts with MCM9. Part of the BRCA1-associated genome surveillance complex (BASC), which contains BRCA1, MSH2, MSH6, MLH1, ATM, BLM, PMS2 and the RAD50-MRE11-NBS1 protein complex. This association could be a dynamic process changing throughout the cell cycle and within subnuclear domains. Phosphorylated by PRKCZ, which may prevent MutS alpha degradation by the ubiquitin-proteasome pathway.

The protein resides in the nucleus. It is found in the chromosome. Functionally, component of the post-replicative DNA mismatch repair system (MMR). Heterodimerizes with MSH2 to form MutS alpha, which binds to DNA mismatches thereby initiating DNA repair. When bound, MutS alpha bends the DNA helix and shields approximately 20 base pairs, and recognizes single base mismatches and dinucleotide insertion-deletion loops (IDL) in the DNA. After mismatch binding, forms a ternary complex with the MutL alpha heterodimer, which is thought to be responsible for directing the downstream MMR events, including strand discrimination, excision, and resynthesis. ATP binding and hydrolysis play a pivotal role in mismatch repair functions. The ATPase activity associated with MutS alpha regulates binding similar to a molecular switch: mismatched DNA provokes ADP--&gt;ATP exchange, resulting in a discernible conformational transition that converts MutS alpha into a sliding clamp capable of hydrolysis-independent diffusion along the DNA backbone. This transition is crucial for mismatch repair. MutS alpha may also play a role in DNA homologous recombination repair. Recruited on chromatin in G1 and early S phase via its PWWP domain that specifically binds trimethylated 'Lys-36' of histone H3 (H3K36me3): early recruitment to chromatin to be replicated allowing a quick identification of mismatch repair to initiate the DNA mismatch repair reaction. This chain is DNA mismatch repair protein Msh6, found in Mus musculus (Mouse).